A 523-amino-acid polypeptide reads, in one-letter code: GMP synthase [glutamine-hydrolyzing] (523 aa).

The region spanning 18–208 (KILIVDFGGQ…LYNVCGAKGD (191 aa)) is the Glutamine amidotransferase type-1 domain. Cys-95 acts as the Nucleophile in catalysis. Residues His-182 and Glu-184 contribute to the active site. A GMPS ATP-PPase domain is found at 209-398 (WNMKSFLAEA…LGLPDYLVHR (190 aa)). 236 to 242 (SGGVDSS) is a binding site for ATP.

As to quaternary structure, homodimer.

It carries out the reaction XMP + L-glutamine + ATP + H2O = GMP + L-glutamate + AMP + diphosphate + 2 H(+). It functions in the pathway purine metabolism; GMP biosynthesis; GMP from XMP (L-Gln route): step 1/1. Catalyzes the synthesis of GMP from XMP. The sequence is that of GMP synthase [glutamine-hydrolyzing] from Treponema denticola (strain ATCC 35405 / DSM 14222 / CIP 103919 / JCM 8153 / KCTC 15104).